Consider the following 918-residue polypeptide: Protein SEY1 homolog (918 aa).

At 1–701 (MESSNHLPNK…AGTSVSSWRN (701 aa)) the chain is on the cytoplasmic side. In terms of domain architecture, GB1/RHD3-type G spans 46-280 (GFKFNVVTIL…VPSDGFFVYS (235 aa)). Residue 56–63 (GSQSSGKS) coordinates GTP. Residues 554 to 626 (SLVLLLKATQ…DALTLLQVLK (73 aa)) are a coiled coil. Residues 702–722 (IPPVFWLVLLVLGWNELRAAF) form a helical membrane-spanning segment. Residues 723–725 (RVL) are Lumenal-facing. Residues 726–746 (LKFYILIPLLIVSYFTFSYSA) traverse the membrane as a helical segment. Residues 747-918 (NKLLGPKANE…CGKAVHLAQW (172 aa)) lie on the Cytoplasmic side of the membrane.

The protein belongs to the TRAFAC class dynamin-like GTPase superfamily. GB1/RHD3 GTPase family. RHD3 subfamily.

The protein localises to the endoplasmic reticulum membrane. Probable GTP-binding protein that may be involved in cell development. This Theileria annulata protein is Protein SEY1 homolog.